The sequence spans 590 residues: Glutamine--fructose-6-phosphate aminotransferase [isomerizing] (590 aa).

Residue Cys2 is the Nucleophile; for GATase activity of the active site. The region spanning 2–219 is the Glutamine amidotransferase type-2 domain; it reads CGIVACILKD…DGEMVILDGD (218 aa). SIS domains follow at residues 277–415 and 438–580; these read VVEE…PELM and LAAT…PDKP. Residue Lys585 is the For Fru-6P isomerization activity of the active site.

Homodimer.

It localises to the cytoplasm. It catalyses the reaction D-fructose 6-phosphate + L-glutamine = D-glucosamine 6-phosphate + L-glutamate. Functionally, catalyzes the first step in hexosamine metabolism, converting fructose-6P into glucosamine-6P using glutamine as a nitrogen source. The sequence is that of Glutamine--fructose-6-phosphate aminotransferase [isomerizing] from Methanothermobacter thermautotrophicus (strain ATCC 29096 / DSM 1053 / JCM 10044 / NBRC 100330 / Delta H) (Methanobacterium thermoautotrophicum).